Reading from the N-terminus, the 372-residue chain is Anhydro-N-acetylmuramic acid kinase (372 aa).

12–19 (GTSMDALD) serves as a coordination point for ATP.

The protein belongs to the anhydro-N-acetylmuramic acid kinase family.

The enzyme catalyses 1,6-anhydro-N-acetyl-beta-muramate + ATP + H2O = N-acetyl-D-muramate 6-phosphate + ADP + H(+). Its pathway is amino-sugar metabolism; 1,6-anhydro-N-acetylmuramate degradation. The protein operates within cell wall biogenesis; peptidoglycan recycling. Its function is as follows. Catalyzes the specific phosphorylation of 1,6-anhydro-N-acetylmuramic acid (anhMurNAc) with the simultaneous cleavage of the 1,6-anhydro ring, generating MurNAc-6-P. Is required for the utilization of anhMurNAc either imported from the medium or derived from its own cell wall murein, and thus plays a role in cell wall recycling. The sequence is that of Anhydro-N-acetylmuramic acid kinase from Coxiella burnetii (strain CbuK_Q154) (Coxiella burnetii (strain Q154)).